Reading from the N-terminus, the 832-residue chain is AP-1 complex subunit gamma-1 (832 aa).

The region spanning 733–832 (LNVYASLLSA…QFDHKFDETL (100 aa)) is the GAE domain.

In terms of assembly, adapter protein complex 1 (AP-1) is a heterotetramer composed of two large adaptins (gamma-type subunit APL4 and beta-type subunit APL2), a medium adaptin (mu-type subunit APM1) and a small adaptin (sigma-type subunit APS1). AP-1 interacts with clathrin. Also a component of the AP-1R complex composed of at least APM2, APL4 and APS1.

Its subcellular location is the cytoplasm. The protein localises to the golgi apparatus membrane. It localises to the cytoplasmic vesicle. It is found in the clathrin-coated vesicle membrane. Its function is as follows. Adaptins are components of the adapter complexes which link clathrin to receptors in coated vesicles. Clathrin-associated protein complexes are believed to interact with the cytoplasmic tails of membrane proteins, leading to their selection and concentration. The AP-1 complex interacts directly with clathrin. Component of the AP-1-related (AP-1R) complex, an adapter protein complex that mediates sorting of cargo SNARE SNC1. In contrast to the APM1-containing AP-1 complex, AP-1R is incapable of sorting CHS3. This chain is AP-1 complex subunit gamma-1 (APL4), found in Saccharomyces cerevisiae (strain ATCC 204508 / S288c) (Baker's yeast).